The sequence spans 433 residues: F-box/kelch-repeat protein At1g24800 (433 aa).

In terms of domain architecture, F-box spans 23–71 (TSMCDLPPKLVGEKILTRIPITSLRAVRSTCKLWNALTKDRVLGKAAAQ). Kelch repeat units lie at residues 170–216 (HKIL…LYGV) and 286–337 (VLYH…RFDN).

This Arabidopsis thaliana (Mouse-ear cress) protein is F-box/kelch-repeat protein At1g24800.